Consider the following 191-residue polypeptide: Peptidyl-tRNA hydrolase (191 aa).

Tyr-16 contributes to the tRNA binding site. Catalysis depends on His-21, which acts as the Proton acceptor. 3 residues coordinate tRNA: Phe-66, Asn-68, and Asn-114.

The protein belongs to the PTH family. Monomer.

It localises to the cytoplasm. It carries out the reaction an N-acyl-L-alpha-aminoacyl-tRNA + H2O = an N-acyl-L-amino acid + a tRNA + H(+). In terms of biological role, hydrolyzes ribosome-free peptidyl-tRNAs (with 1 or more amino acids incorporated), which drop off the ribosome during protein synthesis, or as a result of ribosome stalling. Functionally, catalyzes the release of premature peptidyl moieties from peptidyl-tRNA molecules trapped in stalled 50S ribosomal subunits, and thus maintains levels of free tRNAs and 50S ribosomes. This Geotalea uraniireducens (strain Rf4) (Geobacter uraniireducens) protein is Peptidyl-tRNA hydrolase.